The chain runs to 291 residues: Probable 2-(5''-triphosphoribosyl)-3'-dephosphocoenzyme-A synthase (291 aa).

The protein belongs to the CitG/MdcB family.

The enzyme catalyses 3'-dephospho-CoA + ATP = 2'-(5''-triphospho-alpha-D-ribosyl)-3'-dephospho-CoA + adenine. Functionally, involved in the formation of 2-(5''-phosphoribosyl)-3'-dephosphocoenzyme-A, the prosthetic group of the acyl-carrier protein of the malonate decarboxylase. This is Probable 2-(5''-triphosphoribosyl)-3'-dephosphocoenzyme-A synthase from Pseudomonas syringae pv. tomato (strain ATCC BAA-871 / DC3000).